The chain runs to 489 residues: Rhamnulokinase (489 aa).

Alanine 13 to arginine 17 provides a ligand contact to ATP. Cysteines 68 and 222 form a disulfide. Residues glycine 83 and histidine 236–threonine 238 contribute to the substrate site. Residue aspartate 237 is the Proton acceptor of the active site. Threonine 259 lines the ATP pocket. Asparagine 296 is a substrate binding site. Glutamine 304 serves as a coordination point for ATP. Cysteine 353 and cysteine 370 are joined by a disulfide. Glycine 402 contacts ATP. Cysteine 413 and cysteine 417 form a disulfide bridge.

The protein belongs to the rhamnulokinase family. Monomer. Mg(2+) serves as cofactor.

It catalyses the reaction L-rhamnulose + ATP = L-rhamnulose 1-phosphate + ADP + H(+). Its pathway is carbohydrate degradation; L-rhamnose degradation; glycerone phosphate from L-rhamnose: step 2/3. Involved in the catabolism of L-rhamnose (6-deoxy-L-mannose). Catalyzes the transfer of the gamma-phosphate group from ATP to the 1-hydroxyl group of L-rhamnulose to yield L-rhamnulose 1-phosphate. This chain is Rhamnulokinase, found in Escherichia coli (strain SE11).